We begin with the raw amino-acid sequence, 175 residues long: Large ribosomal subunit protein uL6 (175 aa).

Belongs to the universal ribosomal protein uL6 family. As to quaternary structure, part of the 50S ribosomal subunit.

Functionally, this protein binds to the 23S rRNA, and is important in its secondary structure. It is located near the subunit interface in the base of the L7/L12 stalk, and near the tRNA binding site of the peptidyltransferase center. The sequence is that of Large ribosomal subunit protein uL6 from Xylella fastidiosa (strain 9a5c).